The following is a 291-amino-acid chain: ATP synthase gamma chain (291 aa).

It belongs to the ATPase gamma chain family. In terms of assembly, F-type ATPases have 2 components, CF(1) - the catalytic core - and CF(0) - the membrane proton channel. CF(1) has five subunits: alpha(3), beta(3), gamma(1), delta(1), epsilon(1). CF(0) has three main subunits: a, b and c.

It is found in the cell inner membrane. Functionally, produces ATP from ADP in the presence of a proton gradient across the membrane. The gamma chain is believed to be important in regulating ATPase activity and the flow of protons through the CF(0) complex. The protein is ATP synthase gamma chain of Caulobacter vibrioides (strain NA1000 / CB15N) (Caulobacter crescentus).